The primary structure comprises 534 residues: Glucose-6-phosphate isomerase (534 aa).

Catalysis depends on E356, which acts as the Proton donor. Active-site residues include H387 and K502.

Belongs to the GPI family.

Its subcellular location is the cytoplasm. It catalyses the reaction alpha-D-glucose 6-phosphate = beta-D-fructose 6-phosphate. It participates in carbohydrate biosynthesis; gluconeogenesis. The protein operates within carbohydrate degradation; glycolysis; D-glyceraldehyde 3-phosphate and glycerone phosphate from D-glucose: step 2/4. In terms of biological role, catalyzes the reversible isomerization of glucose-6-phosphate to fructose-6-phosphate. The sequence is that of Glucose-6-phosphate isomerase from Desulfotalea psychrophila (strain LSv54 / DSM 12343).